The chain runs to 234 residues: Phosphoribosylaminoimidazole-succinocarboxamide synthase (234 aa).

It belongs to the SAICAR synthetase family.

The catalysed reaction is 5-amino-1-(5-phospho-D-ribosyl)imidazole-4-carboxylate + L-aspartate + ATP = (2S)-2-[5-amino-1-(5-phospho-beta-D-ribosyl)imidazole-4-carboxamido]succinate + ADP + phosphate + 2 H(+). It participates in purine metabolism; IMP biosynthesis via de novo pathway; 5-amino-1-(5-phospho-D-ribosyl)imidazole-4-carboxamide from 5-amino-1-(5-phospho-D-ribosyl)imidazole-4-carboxylate: step 1/2. The polypeptide is Phosphoribosylaminoimidazole-succinocarboxamide synthase (Clostridium botulinum (strain Loch Maree / Type A3)).